Consider the following 465-residue polypeptide: Juvenile hormone epoxide hydrolase 2 (465 aa).

Residues 7–27 (ILWIAIVIGLGVLYYEITKEF) form a helical membrane-spanning segment. Residue aspartate 224 is the Nucleophile of the active site. Tyrosine 370 acts as the Proton donor in catalysis. The active-site Proton acceptor is histidine 427.

This sequence belongs to the peptidase S33 family.

Its subcellular location is the microsome membrane. The protein resides in the endoplasmic reticulum membrane. It carries out the reaction cis-stilbene oxide + H2O = (1R,2R)-hydrobenzoin. It catalyses the reaction 1-(4-methoxyphenyl)-N-methyl-N-[(3-methyloxetan-3-yl)methyl]methanamine + H2O = 2-{[(4-methoxybenzyl)(methyl)amino]methyl}-2-methylpropane-1,3-diol. Functionally, catalyzes juvenile hormone hydrolysis. The chain is Juvenile hormone epoxide hydrolase 2 from Ctenocephalides felis (Cat flea).